The chain runs to 733 residues: Folic acid synthesis protein fol1 (733 aa).

DHNA stretches follow at residues 55-167 (VVVE…YAER) and 179-277 (IEFS…QIYR). A Phosphotyrosine modification is found at Tyr281. Residues 295–454 (NKIAYLSFGS…LPSQGIRLYS (160 aa)) form an HPK region. In terms of domain architecture, Pterin-binding spans 465-724 (ALTMGILNVT…DTKEMSKVVG (260 aa)). The DHPS stretch occupies residues 467–733 (TMGILNVTPD…GMANAIRYVP (267 aa)). Mg(2+) is bound at residue Asn472. (7,8-dihydropterin-6-yl)methyl diphosphate is bound by residues Thr511, Asp546, Asn565, Asp637, Lys677, and 712 to 714 (RVH).

In the N-terminal section; belongs to the DHNA family. The protein in the central section; belongs to the HPPK family. It in the C-terminal section; belongs to the DHPS family. Mg(2+) is required as a cofactor.

Its subcellular location is the cytoplasm. It carries out the reaction 7,8-dihydroneopterin = 6-hydroxymethyl-7,8-dihydropterin + glycolaldehyde. The catalysed reaction is 6-hydroxymethyl-7,8-dihydropterin + ATP = (7,8-dihydropterin-6-yl)methyl diphosphate + AMP + H(+). The enzyme catalyses (7,8-dihydropterin-6-yl)methyl diphosphate + 4-aminobenzoate = 7,8-dihydropteroate + diphosphate. The protein operates within cofactor biosynthesis; tetrahydrofolate biosynthesis; 2-amino-4-hydroxy-6-hydroxymethyl-7,8-dihydropteridine diphosphate from 7,8-dihydroneopterin triphosphate: step 3/4. It functions in the pathway cofactor biosynthesis; tetrahydrofolate biosynthesis; 2-amino-4-hydroxy-6-hydroxymethyl-7,8-dihydropteridine diphosphate from 7,8-dihydroneopterin triphosphate: step 4/4. It participates in cofactor biosynthesis; tetrahydrofolate biosynthesis; 7,8-dihydrofolate from 2-amino-4-hydroxy-6-hydroxymethyl-7,8-dihydropteridine diphosphate and 4-aminobenzoate: step 1/2. Functionally, catalyzes three sequential steps of tetrahydrofolate biosynthesis. The polypeptide is Folic acid synthesis protein fol1 (fol1) (Schizosaccharomyces pombe (strain 972 / ATCC 24843) (Fission yeast)).